A 270-amino-acid chain; its full sequence is Phosphatidylinositol transfer protein alpha isoform (270 aa).

A 1,2-diacyl-sn-glycero-3-phospho-(1D-myo-inositol) contacts are provided by threonine 58, lysine 60, glutamate 85, asparagine 89, threonine 96, and lysine 194. Lysine 215 bears the N6-acetyllysine mark. Residues 250-263 (TKRQLDEMRQKDPV) are compositionally biased toward basic and acidic residues. Residues 250-270 (TKRQLDEMRQKDPVKGMTADD) form a disordered region.

This sequence belongs to the PtdIns transfer protein family. PI transfer class I subfamily. In terms of processing, phosphorylated by PKC in a calcium and phosphatidylserine-dependent manner.

It is found in the cytoplasm. The protein localises to the nucleus. It carries out the reaction a 1,2-diacyl-sn-glycero-3-phosphocholine(in) = a 1,2-diacyl-sn-glycero-3-phosphocholine(out). The enzyme catalyses a 1,2-diacyl-sn-glycero-3-phospho-(1D-myo-inositol)(in) = a 1,2-diacyl-sn-glycero-3-phospho-(1D-myo-inositol)(out). Its function is as follows. Catalyzes the transfer of phosphatidylinositol (PI) and phosphatidylcholine (PC) between membranes. Shows a preference for PI and PC containing shorter saturated or monosaturated acyl chains at the sn-1 and sn-2 positions. Preference order for PC is C16:1 &gt; C16:0 &gt; C18:1 &gt; C18:0 &gt; C20:4 and for PI is C16:1 &gt; C16:0 &gt; C18:1 &gt; C18:0 &gt; C20:4 &gt; C20:3. This chain is Phosphatidylinositol transfer protein alpha isoform (PITPNA), found in Oryctolagus cuniculus (Rabbit).